Consider the following 151-residue polypeptide: Copper transporter 3 (151 aa).

Helical transmembrane passes span 52-72 (LKMYWVCLAVIFVISAFSECL) and 103-123 (YLVMLAVMSFNGGVFVAAMAG).

It belongs to the copper transporter (Ctr) (TC 1.A.56) family. SLC31A subfamily. In terms of tissue distribution, highly expressed in stems and at lower levels in leaves and flowers.

It localises to the membrane. Its function is as follows. Involved in the transport of copper. This chain is Copper transporter 3 (COPT3), found in Arabidopsis thaliana (Mouse-ear cress).